A 379-amino-acid chain; its full sequence is Queuine tRNA-ribosyltransferase (379 aa).

Residue aspartate 93 is the Proton acceptor of the active site. Residues aspartate 93–phenylalanine 97, aspartate 147, glutamine 191, and glycine 218 each bind substrate. Residues glycine 249 to aspartate 255 are RNA binding. The active-site Nucleophile is aspartate 268. The tract at residues threonine 273–arginine 277 is RNA binding; important for wobble base 34 recognition. Positions 306, 308, 311, and 337 each coordinate Zn(2+).

The protein belongs to the queuine tRNA-ribosyltransferase family. Homodimer. Within each dimer, one monomer is responsible for RNA recognition and catalysis, while the other monomer binds to the replacement base PreQ1. Zn(2+) serves as cofactor.

It catalyses the reaction 7-aminomethyl-7-carbaguanine + guanosine(34) in tRNA = 7-aminomethyl-7-carbaguanosine(34) in tRNA + guanine. It participates in tRNA modification; tRNA-queuosine biosynthesis. Its function is as follows. Catalyzes the base-exchange of a guanine (G) residue with the queuine precursor 7-aminomethyl-7-deazaguanine (PreQ1) at position 34 (anticodon wobble position) in tRNAs with GU(N) anticodons (tRNA-Asp, -Asn, -His and -Tyr). Catalysis occurs through a double-displacement mechanism. The nucleophile active site attacks the C1' of nucleotide 34 to detach the guanine base from the RNA, forming a covalent enzyme-RNA intermediate. The proton acceptor active site deprotonates the incoming PreQ1, allowing a nucleophilic attack on the C1' of the ribose to form the product. After dissociation, two additional enzymatic reactions on the tRNA convert PreQ1 to queuine (Q), resulting in the hypermodified nucleoside queuosine (7-(((4,5-cis-dihydroxy-2-cyclopenten-1-yl)amino)methyl)-7-deazaguanosine). The chain is Queuine tRNA-ribosyltransferase from Actinobacillus succinogenes (strain ATCC 55618 / DSM 22257 / CCUG 43843 / 130Z).